The sequence spans 205 residues: Suppressor of IKBKE 1 (205 aa).

Coiled coils occupy residues 4-32 and 154-192; these read TIDK…LIDQ and KAIQ…ESLR.

Belongs to the SIKE family. Interacts with IKBKE and TBK1 via its coiled coil region. Interaction with TBK1 is disrupted upon viral infection or TLR3 stimulation. Interacts with CDC42BPB. Associates with the STRIPAK core complex composed of PP2A catalytic and scaffolding subunits, the striatins (PP2A regulatory subunits), the striatin-associated proteins MOB4, STRIP1 and STRIP2, PDCD10 and members of the STE20 kinases, such as STK24 and STK26.

It localises to the cytoplasm. Suppressor of IKK-epsilon. Associates with the striatin-interacting phosphatase and kinase (STRIPAK) core complex, forming the extended (SIKE1:SLMAP)STRIPAK complex. The (SIKE1:SLMAP)STRIPAK complex dephosphorylates STK3 leading to the inhibition of Hippo signaling and the control of cell growth. This Xenopus laevis (African clawed frog) protein is Suppressor of IKBKE 1 (sike1).